Here is a 202-residue protein sequence, read N- to C-terminus: Imidazoleglycerol-phosphate dehydratase (202 aa).

The protein belongs to the imidazoleglycerol-phosphate dehydratase family.

It is found in the cytoplasm. It carries out the reaction D-erythro-1-(imidazol-4-yl)glycerol 3-phosphate = 3-(imidazol-4-yl)-2-oxopropyl phosphate + H2O. Its pathway is amino-acid biosynthesis; L-histidine biosynthesis; L-histidine from 5-phospho-alpha-D-ribose 1-diphosphate: step 6/9. The sequence is that of Imidazoleglycerol-phosphate dehydratase from Parasynechococcus marenigrum (strain WH8102).